The following is a 544-amino-acid chain: Chaperonin GroEL 1 (544 aa).

Residues 29–32 (TLGP), 86–90 (DGTTT), Gly413, 476–478 (NAA), and Asp492 each bind ATP. The tract at residues 523-544 (EPVKAPAGGGDMDGMGGMGGMM) is disordered. A compositionally biased stretch (gly residues) spans 529–544 (AGGGDMDGMGGMGGMM).

The protein belongs to the chaperonin (HSP60) family. Forms a cylinder of 14 subunits composed of two heptameric rings stacked back-to-back. Interacts with the co-chaperonin GroES.

Its subcellular location is the cytoplasm. The enzyme catalyses ATP + H2O + a folded polypeptide = ADP + phosphate + an unfolded polypeptide.. Functionally, together with its co-chaperonin GroES, plays an essential role in assisting protein folding. The GroEL-GroES system forms a nano-cage that allows encapsulation of the non-native substrate proteins and provides a physical environment optimized to promote and accelerate protein folding. The chain is Chaperonin GroEL 1 from Cutibacterium acnes (strain DSM 16379 / KPA171202) (Propionibacterium acnes).